A 246-amino-acid polypeptide reads, in one-letter code: Uridylate kinase (246 aa).

K13 to G16 serves as a coordination point for ATP. UMP is bound at residue G54. Residues G55 and R59 each contribute to the ATP site. Residues D74 and A135–T142 each bind UMP. ATP-binding residues include N163, Y169, and D172.

This sequence belongs to the UMP kinase family. Homohexamer.

It is found in the cytoplasm. It catalyses the reaction UMP + ATP = UDP + ADP. It participates in pyrimidine metabolism; CTP biosynthesis via de novo pathway; UDP from UMP (UMPK route): step 1/1. Its activity is regulated as follows. Inhibited by UTP. Functionally, catalyzes the reversible phosphorylation of UMP to UDP. This Bifidobacterium longum (strain NCC 2705) protein is Uridylate kinase.